The sequence spans 89 residues: Small ribosomal subunit protein uS15 (89 aa).

It belongs to the universal ribosomal protein uS15 family. In terms of assembly, part of the 30S ribosomal subunit. Forms a bridge to the 50S subunit in the 70S ribosome, contacting the 23S rRNA.

Its function is as follows. One of the primary rRNA binding proteins, it binds directly to 16S rRNA where it helps nucleate assembly of the platform of the 30S subunit by binding and bridging several RNA helices of the 16S rRNA. Functionally, forms an intersubunit bridge (bridge B4) with the 23S rRNA of the 50S subunit in the ribosome. In Anaeromyxobacter dehalogenans (strain 2CP-1 / ATCC BAA-258), this protein is Small ribosomal subunit protein uS15.